The chain runs to 555 residues: Suppressor of tumorigenicity 7 protein-like (555 aa).

Transmembrane regions (helical) follow at residues 36–56 and 80–100; these read GLAG…LYAL and FYVA…IFEW. The tract at residues 126–148 is disordered; sequence TESSISEPGSPSNNRESETSRQN.

The protein belongs to the ST7 family.

The protein localises to the membrane. This is Suppressor of tumorigenicity 7 protein-like (ST7L) from Bos taurus (Bovine).